Consider the following 457-residue polypeptide: UDP-N-acetylmuramate--L-alanine ligase (457 aa).

109-115 (GTDGKTT) provides a ligand contact to ATP.

The protein belongs to the MurCDEF family.

The protein resides in the cytoplasm. The catalysed reaction is UDP-N-acetyl-alpha-D-muramate + L-alanine + ATP = UDP-N-acetyl-alpha-D-muramoyl-L-alanine + ADP + phosphate + H(+). The protein operates within cell wall biogenesis; peptidoglycan biosynthesis. In terms of biological role, cell wall formation. The sequence is that of UDP-N-acetylmuramate--L-alanine ligase from Thermotoga neapolitana (strain ATCC 49049 / DSM 4359 / NBRC 107923 / NS-E).